The following is a 440-amino-acid chain: Sialyltransferase-like protein 2 (440 aa).

Over 1 to 5 the chain is Cytoplasmic; the sequence is MKLLH. A helical; Signal-anchor for type II membrane protein membrane pass occupies residues 6–26; the sequence is LIFLLALTTGISAVLIYIIGV. Residues 27–440 are Lumenal-facing; it reads SNLYESNRFT…HGQLCITPAD (414 aa). 2 N-linked (GlcNAc...) asparagine glycosylation sites follow: Asn-113 and Asn-149.

This sequence belongs to the glycosyltransferase 29 family.

The protein localises to the golgi apparatus membrane. Functionally, may be involved in the transfer of 2-keto-3-deoxy-D-lyxo-heptulosaric acid (Dha) and/or 2-keto-3-deoxy-D-manno-octulosonic acid (Kdo) on the homogalacturonan backbone of rhamnogalacturonan-II. Required for efficient pollen grain germination and pollen tube elongation. Does not possess sialyltransferase activity in vitro. The polypeptide is Sialyltransferase-like protein 2 (Arabidopsis thaliana (Mouse-ear cress)).